Reading from the N-terminus, the 445-residue chain is MTRSANSPFEVAIVGGGITGLALAVGLLKRNVSFTIYERAENFGELGVGITFTPNAQRAMEALDPCVLQSFTNVASAPSGGTINFVDGVREQGSEDPRTSTAALLFQLHVKGGYKACRRCDFVDQIVQHIPKDCVQYRKWLDSIETDHESGRAVLKFRDGEIAHADVVIGCDGIRSQVRASMFGTDELCPRAQYSHQLGYRGMVPLAQATAVLGPEKTSSAVLHTGPGAFVLTIPLAEVHAMHIEAFIMDKEEWPEVQTSSDSKRYVLPATRNEATKAFAEFGPTVRSAVSMFPEKLEKWAVFDMLEAPVPTFAKGRVCLAGDAAHASTPNQGGGAGFGIEDALVLAEVLAVLAEAPNVSGIVASEALAVYSEVRYERSQWLVRSSRRTGELCTWKDRDWGLAAEELSRDIISRSHQLWDHDTAGMVSDALAILGERVRGADTAF.

Residues 8 to 28 traverse the membrane as a helical segment; it reads PFEVAIVGGGITGLALAVGLL. Asn-31 carries N-linked (GlcNAc...) asparagine glycosylation. Glu-38 and Arg-119 together coordinate FAD. Arg-201 is a catalytic residue. FAD is bound by residues Asp-323 and Ala-336. N-linked (GlcNAc...) asparagine glycosylation is present at Asn-358.

It belongs to the paxM FAD-dependent monooxygenase family. It depends on FAD as a cofactor.

It localises to the membrane. The protein operates within secondary metabolite biosynthesis. FAD-dependent monooxygenase; part of the gene cluster that mediates the biosynthesis of sorbicillinoids, a diverse group of yellow secondary metabolites that restrict growth of competing pathogenic fungi but not of bacteria. Sorbicillinoids biosynthesis requires the action of two PKSs. SorA iteratively combines three acetyl units and the growing chain is modified by the ketoacyl reductase subunit, and optional by the enoyl reductase subunit in the second cycle. The polyketide is then handed over to the PKS SorB, which adds three more acetyl units, and two methyl groups. SorB releases an aldehyde, which undergoes spontaneous cyclization resulting in the formation of sorbicillin or 2',3'-dihydrosorbicillin. The monooxygenase sorC oxidizes sorbicillin and 2',3'-dihydrosorbicillin to 2',3'-dihydrosorbicillinol and sorbicillinol, respectively. The oxidoreductase sorD further converts sorbicillinol into oxosorbicillinol. Sorbicillinol is the building block for the other sorbicillinoids such as disorbicillinol, bisvertinolon, and dihydrobisvertinolone. The protein is FAD-dependent monooxygenase sorC of Penicillium rubens (strain ATCC 28089 / DSM 1075 / NRRL 1951 / Wisconsin 54-1255) (Penicillium chrysogenum).